Here is an 89-residue protein sequence, read N- to C-terminus: Small ribosomal subunit protein uS19 (89 aa).

Belongs to the universal ribosomal protein uS19 family.

Protein S19 forms a complex with S13 that binds strongly to the 16S ribosomal RNA. In Azobacteroides pseudotrichonymphae genomovar. CFP2, this protein is Small ribosomal subunit protein uS19.